Consider the following 360-residue polypeptide: DNA replication and repair protein RecF (360 aa).

30–37 (GQNGSGKT) lines the ATP pocket.

Belongs to the RecF family.

The protein resides in the cytoplasm. The RecF protein is involved in DNA metabolism; it is required for DNA replication and normal SOS inducibility. RecF binds preferentially to single-stranded, linear DNA. It also seems to bind ATP. This Shewanella sp. (strain MR-4) protein is DNA replication and repair protein RecF.